A 203-amino-acid chain; its full sequence is Large ribosomal subunit protein bL25 (203 aa).

Belongs to the bacterial ribosomal protein bL25 family. CTC subfamily. In terms of assembly, part of the 50S ribosomal subunit; part of the 5S rRNA/L5/L18/L25 subcomplex. Contacts the 5S rRNA. Binds to the 5S rRNA independently of L5 and L18.

This is one of the proteins that binds to the 5S RNA in the ribosome where it forms part of the central protuberance. The protein is Large ribosomal subunit protein bL25 of Wolbachia pipientis wMel.